The primary structure comprises 161 residues: Mediator of RNA polymerase II transcription subunit 31 (161 aa).

The disordered stretch occupies residues 124–161 (GTGVDEQGAQDTQEGEGEQKQNKEEDAQDAQENTESKT).

This sequence belongs to the Mediator complex subunit 31 family. Component of the Mediator complex.

It localises to the nucleus. In terms of biological role, component of the Mediator complex, a coactivator involved in the regulated transcription of nearly all RNA polymerase II-dependent genes. Mediator functions as a bridge to convey information from gene-specific regulatory proteins to the basal RNA polymerase II transcription machinery. Mediator is recruited to promoters by direct interactions with regulatory proteins and serves as a scaffold for the assembly of a functional preinitiation complex with RNA polymerase II and the general transcription factors. This is Mediator of RNA polymerase II transcription subunit 31 (soh1) from Aspergillus clavatus (strain ATCC 1007 / CBS 513.65 / DSM 816 / NCTC 3887 / NRRL 1 / QM 1276 / 107).